The following is a 311-amino-acid chain: Ornithine carbamoyltransferase (311 aa).

Residues Gln-85, Arg-109, and 136-139 (HPCQ) each bind carbamoyl phosphate. Residues Asn-167, Asp-231, and 235–236 (SM) each bind L-ornithine. Carbamoyl phosphate is bound by residues 271 to 272 (CL) and Arg-299.

Belongs to the aspartate/ornithine carbamoyltransferase superfamily. OTCase family.

The protein resides in the cytoplasm. It carries out the reaction carbamoyl phosphate + L-ornithine = L-citrulline + phosphate + H(+). The protein operates within amino-acid biosynthesis; L-arginine biosynthesis; L-arginine from L-ornithine and carbamoyl phosphate: step 1/3. In terms of biological role, reversibly catalyzes the transfer of the carbamoyl group from carbamoyl phosphate (CP) to the N(epsilon) atom of ornithine (ORN) to produce L-citrulline. The chain is Ornithine carbamoyltransferase (argF) from Geobacillus stearothermophilus (Bacillus stearothermophilus).